The sequence spans 359 residues: MVLELVAMELKVWVDGIQRVVCGVSEQTTCQEVVIALAQAIGQTGRFVLVQRLREKERQLLPQECPVGAQATCGQFANDVQFVLRRTGPSLSGRPSSDNCPPPERCPVRASLPPKPSAIPGREPRKALTFNLRCPKLVPSPSIPEPAALVGPIPDGFADLQDLELRIQRNTEELGHEAFWEQELQREQAREREGQARLQALSAATAEHAARLEALDAQACALEAELRLAAEAPGPPSATASAAERLRQDLATQERHSLEMQGTLALVSQALEAAEHALQAQAQELEELNRELRQCNLQQFIQQTGAALPPPPPQLDRTIPSTQDLLSPNRGELQGVPQSHILVSSLSPEVPPMRQSSWR.

In terms of domain architecture, Ras-associating spans 6–89; the sequence is VAMELKVWVD…VQFVLRRTGP (84 aa). A disordered region spans residues 87–123; it reads TGPSLSGRPSSDNCPPPERCPVRASLPPKPSAIPGRE. Positions 89 to 99 are enriched in polar residues; it reads PSLSGRPSSDN. Coiled coils occupy residues 180–208 and 242–301; these read WEQELQREQAREREGQARLQALSAATAEH and AAER…QQFI. The interval 339 to 359 is disordered; the sequence is SHILVSSLSPEVPPMRQSSWR.

Interacts with MAP2K7 and GTP-bound NRAS. Post-translationally, polyubiquitinated and degraded by the proteasome upon prolonged stress stimuli.

It localises to the cytoplasm. Its subcellular location is the cytoskeleton. It is found in the microtubule organizing center. The protein resides in the centrosome. In terms of biological role, negatively regulates stress-induced JNK activation and apoptosis by promoting MAP2K7 phosphorylation and inhibiting its ability to activate JNK. Following prolonged stress, anti-apoptotic effect stops because of degradation of RASSF7 protein via the ubiquitin-proteasome pathway. Required for the activation of AURKB and chromosomal congression during mitosis where it stimulates microtubule polymerization. The polypeptide is Ras association domain-containing protein 7 (Rassf7) (Mus musculus (Mouse)).